The following is a 372-amino-acid chain: Putative glutamate--cysteine ligase 2 (372 aa).

It belongs to the glutamate--cysteine ligase type 2 family. YbdK subfamily.

The catalysed reaction is L-cysteine + L-glutamate + ATP = gamma-L-glutamyl-L-cysteine + ADP + phosphate + H(+). Its function is as follows. ATP-dependent carboxylate-amine ligase which exhibits weak glutamate--cysteine ligase activity. In Cupriavidus metallidurans (strain ATCC 43123 / DSM 2839 / NBRC 102507 / CH34) (Ralstonia metallidurans), this protein is Putative glutamate--cysteine ligase 2.